A 47-amino-acid polypeptide reads, in one-letter code: Exoenzymes regulatory protein AepH (47 aa).

Composition is skewed to basic and acidic residues over residues 1–17 and 33–47; these read MGQE…QDGH and TKKE…DANV. Positions 1–47 are disordered; it reads MGQEPKGIESRKIQDGHVRKKVGRQQGLWVRTTKKEKFSRMSRDANV.

Functionally, involved in the control of extracellular enzymes production. Stimulates PEL, PEH, CEL, and PRT production. This chain is Exoenzymes regulatory protein AepH (aepH), found in Pectobacterium carotovorum subsp. carotovorum (Erwinia carotovora subsp. carotovora).